A 345-amino-acid polypeptide reads, in one-letter code: Tetraacyldisaccharide 4'-kinase (345 aa).

Residue 51–58 (HVGGAGKT) participates in ATP binding.

It belongs to the LpxK family.

It carries out the reaction a lipid A disaccharide + ATP = a lipid IVA + ADP + H(+). Its pathway is glycolipid biosynthesis; lipid IV(A) biosynthesis; lipid IV(A) from (3R)-3-hydroxytetradecanoyl-[acyl-carrier-protein] and UDP-N-acetyl-alpha-D-glucosamine: step 6/6. Its function is as follows. Transfers the gamma-phosphate of ATP to the 4'-position of a tetraacyldisaccharide 1-phosphate intermediate (termed DS-1-P) to form tetraacyldisaccharide 1,4'-bis-phosphate (lipid IVA). The chain is Tetraacyldisaccharide 4'-kinase from Bradyrhizobium sp. (strain BTAi1 / ATCC BAA-1182).